The primary structure comprises 376 residues: Ribonucleoside-diphosphate reductase subunit beta (376 aa).

Fe cation contacts are provided by D85, E116, and H119. The active site involves Y123. Residues E205, E239, and H242 each coordinate Fe cation.

This sequence belongs to the ribonucleoside diphosphate reductase small chain family. Tetramer of two alpha and two beta subunits. Fe cation serves as cofactor.

It catalyses the reaction a 2'-deoxyribonucleoside 5'-diphosphate + [thioredoxin]-disulfide + H2O = a ribonucleoside 5'-diphosphate + [thioredoxin]-dithiol. Its function is as follows. Provides the precursors necessary for DNA synthesis. Catalyzes the biosynthesis of deoxyribonucleotides from the corresponding ribonucleotides. The polypeptide is Ribonucleoside-diphosphate reductase subunit beta (nrdB) (Buchnera aphidicola subsp. Acyrthosiphon pisum (strain APS) (Acyrthosiphon pisum symbiotic bacterium)).